Here is a 347-residue protein sequence, read N- to C-terminus: NADH-quinone oxidoreductase subunit H (347 aa).

Transmembrane regions (helical) follow at residues 13–33 (LLILLKSVALIVILLVGVAYI), 50–70 (PNVVGPWGLFQAFADLFKFVF), 82–102 (GVFLLAPVVAAGLALAAWAVI), 115–135 (VGILYVFAIASLEVYGVIMAG), 161–181 (IGFVIVTVLLAVGSLNLTDIV), 198–218 (FLDWHWLALFPMFIIFFISAL), 248–268 (FLLFFLGEYVAIVLMCALTTI), 286–306 (VPGVVWFVLKLVAVFFMFALV), and 321–341 (LGWKVFLPISLFMVVATAAFL).

This sequence belongs to the complex I subunit 1 family. NDH-1 is composed of 14 different subunits. Subunits NuoA, H, J, K, L, M, N constitute the membrane sector of the complex.

The protein resides in the cell inner membrane. The enzyme catalyses a quinone + NADH + 5 H(+)(in) = a quinol + NAD(+) + 4 H(+)(out). NDH-1 shuttles electrons from NADH, via FMN and iron-sulfur (Fe-S) centers, to quinones in the respiratory chain. The immediate electron acceptor for the enzyme in this species is believed to be ubiquinone. Couples the redox reaction to proton translocation (for every two electrons transferred, four hydrogen ions are translocated across the cytoplasmic membrane), and thus conserves the redox energy in a proton gradient. This subunit may bind ubiquinone. This Chelativorans sp. (strain BNC1) protein is NADH-quinone oxidoreductase subunit H.